The sequence spans 144 residues: Small ribosomal subunit protein eS12z (144 aa).

Ser2 is modified (N-acetylserine).

This sequence belongs to the eukaryotic ribosomal protein eS12 family.

The protein is Small ribosomal subunit protein eS12z (RPS12A) of Arabidopsis thaliana (Mouse-ear cress).